Consider the following 336-residue polypeptide: Protein-glutamate methylesterase/protein-glutamine glutaminase 3 (336 aa).

A Response regulatory domain is found at 2-119 (KIAIVNDMPM…PNPREAAAPL (118 aa)). D53 is subject to 4-aspartylphosphate. The 190-residue stretch at 147 to 336 (VSRRDRLVAI…APRLMEVFTQ (190 aa)) folds into the CheB-type methylesterase domain. Active-site residues include S159, H186, and D279.

The protein belongs to the CheB family. In terms of processing, phosphorylated by CheA. Phosphorylation of the N-terminal regulatory domain activates the methylesterase activity.

Its subcellular location is the cytoplasm. The enzyme catalyses [protein]-L-glutamate 5-O-methyl ester + H2O = L-glutamyl-[protein] + methanol + H(+). It carries out the reaction L-glutaminyl-[protein] + H2O = L-glutamyl-[protein] + NH4(+). Involved in chemotaxis. Part of a chemotaxis signal transduction system that modulates chemotaxis in response to various stimuli. Catalyzes the demethylation of specific methylglutamate residues introduced into the chemoreceptors (methyl-accepting chemotaxis proteins or MCP) by CheR. Also mediates the irreversible deamidation of specific glutamine residues to glutamic acid. The protein is Protein-glutamate methylesterase/protein-glutamine glutaminase 3 of Pseudomonas syringae pv. tomato (strain ATCC BAA-871 / DC3000).